The chain runs to 461 residues: Cysteine--tRNA ligase (461 aa).

C30 serves as a coordination point for Zn(2+). The short motif at P32–N42 is the 'HIGH' region element. Zn(2+) contacts are provided by C212, H237, and E241. Positions K270–S274 match the 'KMSKS' region motif. K273 serves as a coordination point for ATP.

This sequence belongs to the class-I aminoacyl-tRNA synthetase family. In terms of assembly, monomer. Zn(2+) is required as a cofactor.

Its subcellular location is the cytoplasm. The enzyme catalyses tRNA(Cys) + L-cysteine + ATP = L-cysteinyl-tRNA(Cys) + AMP + diphosphate. This is Cysteine--tRNA ligase from Maricaulis maris (strain MCS10) (Caulobacter maris).